The sequence spans 111 residues: UPF0342 protein SAG1376 (111 aa).

A compositionally biased stretch (polar residues) spans 52 to 63; that stretch reads QEMMQSGQMPSQ. The disordered stretch occupies residues 52–71; sequence QEMMQSGQMPSQEEQDEMSK.

It belongs to the UPF0342 family.

The chain is UPF0342 protein SAG1376 from Streptococcus agalactiae serotype V (strain ATCC BAA-611 / 2603 V/R).